The sequence spans 274 residues: Phloretin hydrolase (274 aa).

The Zn(2+) site is built by His-123, Glu-154, His-251, and Glu-255.

Belongs to the DAPG/phloretin hydrolase family. In terms of assembly, homodimer. Zn(2+) serves as cofactor.

It localises to the cytoplasm. It catalyses the reaction phloretin + H2O = phloretate + 1,3,5-trihydroxybenzene + H(+). Catalyzes the hydrolytic C-C cleavage of phloretin to phloroglucinol and 3-(4-hydroxyphenyl)propionic acid during flavonoid degradation. Also hydrolyzes other C-acylated phenols. The sequence is that of Phloretin hydrolase (phy) from Eubacterium ramulus.